Here is a 264-residue protein sequence, read N- to C-terminus: MKQYLDMMRHVREQGAVKTDRTGTGTRSVFGYQMRFDLQQGFPLVTTKKLHLRSIIYELLWFLNGDTNIKYLKDNGVSIWDEWADESGDLGPVYGYQWRSWPAPNGEHIDQISNVLAQIKRNPDSRRHMVVAYNPAFVDQMALPPCHAMFQFYVAEGRLSCQLYQRSADIFLGVPFNIASYALLTHMFAQQCDLDVGDFIWTGGDVHLYNNHLDQAKEQLDREPRPLPQLQIRRKPASLFDYEFEDFEITGYDPHPHIKAPVAV.

Residue Arg21 coordinates dUMP. Residue His51 coordinates (6R)-5,10-methylene-5,6,7,8-tetrahydrofolate. DUMP is bound at residue 126–127 (RR). The active-site Nucleophile is Cys146. Residues 166–169 (RSAD), Asn177, and 207–209 (HLY) each bind dUMP. Residue Asp169 participates in (6R)-5,10-methylene-5,6,7,8-tetrahydrofolate binding. Ala263 is a binding site for (6R)-5,10-methylene-5,6,7,8-tetrahydrofolate.

Belongs to the thymidylate synthase family. Bacterial-type ThyA subfamily. As to quaternary structure, homodimer.

The protein localises to the cytoplasm. It carries out the reaction dUMP + (6R)-5,10-methylene-5,6,7,8-tetrahydrofolate = 7,8-dihydrofolate + dTMP. It functions in the pathway pyrimidine metabolism; dTTP biosynthesis. Functionally, catalyzes the reductive methylation of 2'-deoxyuridine-5'-monophosphate (dUMP) to 2'-deoxythymidine-5'-monophosphate (dTMP) while utilizing 5,10-methylenetetrahydrofolate (mTHF) as the methyl donor and reductant in the reaction, yielding dihydrofolate (DHF) as a by-product. This enzymatic reaction provides an intracellular de novo source of dTMP, an essential precursor for DNA biosynthesis. This is Thymidylate synthase from Hahella chejuensis (strain KCTC 2396).